We begin with the raw amino-acid sequence, 143 residues long: MAKKIVGFIKLQVPAGKANPSPPIGPALGQRGLNIMEFCKAFNAQTQSVEPGLPLPVVITAFADKSFTFIIKTPPAITLIKKAIKLDKGSARPHTDKVGKITRAQLEEIAKTKMKDLTAADLDAAVRTIAGSARSMGVNVEGV.

The protein belongs to the universal ribosomal protein uL11 family. In terms of assembly, part of the ribosomal stalk of the 50S ribosomal subunit. Interacts with L10 and the large rRNA to form the base of the stalk. L10 forms an elongated spine to which L12 dimers bind in a sequential fashion forming a multimeric L10(L12)X complex. One or more lysine residues are methylated.

In terms of biological role, forms part of the ribosomal stalk which helps the ribosome interact with GTP-bound translation factors. The protein is Large ribosomal subunit protein uL11 of Variovorax paradoxus (strain S110).